The sequence spans 161 residues: Large ribosomal subunit protein uL15 (161 aa).

The interval 1-44 (MKLSEIADNAGSRKKRMRVGRGIGSGKGKTAGRGGKGQTARSGV) is disordered. The segment covering 21-37 (RGIGSGKGKTAGRGGKG) has biased composition (gly residues).

It belongs to the universal ribosomal protein uL15 family. Part of the 50S ribosomal subunit.

Functionally, binds to the 23S rRNA. The chain is Large ribosomal subunit protein uL15 from Rhodopseudomonas palustris (strain BisA53).